The primary structure comprises 1689 residues: DNA-directed RNA polymerase I subunit rpa1 (1689 aa).

Zn(2+)-binding residues include cysteine 63, cysteine 66, cysteine 73, and histidine 76. 2 positions are modified to phosphoserine: serine 159 and serine 161. The segment covering 269–280 (VLRDTSKKHHED) has biased composition (basic and acidic residues). The disordered stretch occupies residues 269–295 (VLRDTSKKHHEDEGYDGDSDSSNESEV). Residues 281 to 295 (EGYDGDSDSSNESEV) are compositionally biased toward acidic residues. The Mg(2+) site is built by aspartate 643, aspartate 645, and aspartate 647. The interval 1005–1017 (PQEYYFHCMAGRE) is bridging helix. Residues 1346–1440 (RKSGGKDDTV…EEDEGFKSDE (95 aa)) are disordered. Phosphoserine occurs at positions 1438 and 1441.

This sequence belongs to the RNA polymerase beta' chain family. Component of the RNA polymerase I (Pol I) complex consisting of at least 13 subunits.

It is found in the nucleus. The protein localises to the nucleolus. It carries out the reaction RNA(n) + a ribonucleoside 5'-triphosphate = RNA(n+1) + diphosphate. In terms of biological role, DNA-dependent RNA polymerase catalyzes the transcription of DNA into RNA using the four ribonucleoside triphosphates as substrates. Largest and catalytic core component of RNA polymerase I which synthesizes ribosomal RNA precursors. Forms the polymerase active center together with the second largest subunit. A single stranded DNA template strand of the promoter is positioned within the central active site cleft of Pol I. A bridging helix emanates from RPA1 and crosses the cleft near the catalytic site and is thought to promote translocation of Pol I by acting as a ratchet that moves the RNA-DNA hybrid through the active site by switching from straight to bent conformations at each step of nucleotide addition. In Schizosaccharomyces pombe (strain 972 / ATCC 24843) (Fission yeast), this protein is DNA-directed RNA polymerase I subunit rpa1 (rpa1).